The primary structure comprises 160 residues: Arginine repressor (160 aa).

It belongs to the ArgR family.

The protein resides in the cytoplasm. Its pathway is amino-acid biosynthesis; L-arginine biosynthesis [regulation]. In terms of biological role, regulates arginine biosynthesis genes. The chain is Arginine repressor from Anaeromyxobacter dehalogenans (strain 2CP-1 / ATCC BAA-258).